Here is a 535-residue protein sequence, read N- to C-terminus: Tetrathionate hydrolase (535 aa).

Residues 1-39 form the signal peptide; that stretch reads MNLKILVGLFILGIIILSAMTFLNFTTIVAQDKGDQQPK. The N-linked (GlcNAc...) asparagine glycan is linked to Asn50.

This sequence belongs to the tetrathionate hydrolase family. As to quaternary structure, monomer and homodimer; in equilibrium.

It localises to the cell surface. It carries out the reaction tetrathionate + H2O = sulfur + thiosulfate + sulfate + H(+). Catalyzes the hydrolysis of tetrathionate to generate elemental sulfur, thiosulfate and sulfate. The polypeptide is Tetrathionate hydrolase (Acidianus ambivalens (Desulfurolobus ambivalens)).